The primary structure comprises 455 residues: UPF0210 protein Teth514_2074 (455 aa).

The protein belongs to the UPF0210 family. In terms of assembly, homodimer.

The protein is UPF0210 protein Teth514_2074 of Thermoanaerobacter sp. (strain X514).